The sequence spans 469 residues: 3-isopropylmalate dehydratase large subunit (469 aa).

Cysteine 350, cysteine 410, and cysteine 413 together coordinate [4Fe-4S] cluster.

The protein belongs to the aconitase/IPM isomerase family. LeuC type 1 subfamily. Heterodimer of LeuC and LeuD. Requires [4Fe-4S] cluster as cofactor.

The catalysed reaction is (2R,3S)-3-isopropylmalate = (2S)-2-isopropylmalate. Its pathway is amino-acid biosynthesis; L-leucine biosynthesis; L-leucine from 3-methyl-2-oxobutanoate: step 2/4. In terms of biological role, catalyzes the isomerization between 2-isopropylmalate and 3-isopropylmalate, via the formation of 2-isopropylmaleate. The sequence is that of 3-isopropylmalate dehydratase large subunit from Brucella abortus (strain S19).